We begin with the raw amino-acid sequence, 262 residues long: ATP synthase subunit delta (262 aa).

This sequence belongs to the ATPase delta chain family. F-type ATPases have 2 components, F(1) - the catalytic core - and F(0) - the membrane proton channel. F(1) has five subunits: alpha(3), beta(3), gamma(1), delta(1), epsilon(1). F(0) has three main subunits: a(1), b(2) and c(10-14). The alpha and beta chains form an alternating ring which encloses part of the gamma chain. F(1) is attached to F(0) by a central stalk formed by the gamma and epsilon chains, while a peripheral stalk is formed by the delta and b chains.

The protein resides in the cell membrane. In terms of biological role, f(1)F(0) ATP synthase produces ATP from ADP in the presence of a proton or sodium gradient. F-type ATPases consist of two structural domains, F(1) containing the extramembraneous catalytic core and F(0) containing the membrane proton channel, linked together by a central stalk and a peripheral stalk. During catalysis, ATP synthesis in the catalytic domain of F(1) is coupled via a rotary mechanism of the central stalk subunits to proton translocation. Its function is as follows. This protein is part of the stalk that links CF(0) to CF(1). It either transmits conformational changes from CF(0) to CF(1) or is implicated in proton conduction. The polypeptide is ATP synthase subunit delta (Tropheryma whipplei (strain TW08/27) (Whipple's bacillus)).